A 200-amino-acid polypeptide reads, in one-letter code: ATP-dependent Clp protease proteolytic subunit (200 aa).

The active-site Nucleophile is Ser104. His129 is an active-site residue.

This sequence belongs to the peptidase S14 family. In terms of assembly, fourteen ClpP subunits assemble into 2 heptameric rings which stack back to back to give a disk-like structure with a central cavity, resembling the structure of eukaryotic proteasomes.

It is found in the cytoplasm. It carries out the reaction Hydrolysis of proteins to small peptides in the presence of ATP and magnesium. alpha-casein is the usual test substrate. In the absence of ATP, only oligopeptides shorter than five residues are hydrolyzed (such as succinyl-Leu-Tyr-|-NHMec, and Leu-Tyr-Leu-|-Tyr-Trp, in which cleavage of the -Tyr-|-Leu- and -Tyr-|-Trp bonds also occurs).. Cleaves peptides in various proteins in a process that requires ATP hydrolysis. Has a chymotrypsin-like activity. Plays a major role in the degradation of misfolded proteins. This is ATP-dependent Clp protease proteolytic subunit from Rubrobacter xylanophilus (strain DSM 9941 / JCM 11954 / NBRC 16129 / PRD-1).